A 200-amino-acid chain; its full sequence is Recombination protein RecR (200 aa).

The C4-type zinc-finger motif lies at 59–74 (CEKCNTFTEAQVCEVC). In terms of domain architecture, Toprim spans 82 to 177 (ALLCVVETPA…AVTRLARGVP (96 aa)).

The protein belongs to the RecR family.

Functionally, may play a role in DNA repair. It seems to be involved in an RecBC-independent recombinational process of DNA repair. It may act with RecF and RecO. This is Recombination protein RecR from Burkholderia pseudomallei (strain 1106a).